The sequence spans 148 residues: Snaclec 7 (148 aa).

The signal sequence occupies residues 1–23; the sequence is MGRFIFVSFGLLVVFLSLSGTGA. Intrachain disulfides connect Cys-27-Cys-38, Cys-55-Cys-144, and Cys-121-Cys-136. Residues 34–145 enclose the C-type lectin domain; that stretch reads HERHCYKVIN…CSSTHPFVCK (112 aa).

Belongs to the snaclec family. In terms of assembly, heterodimer; disulfide-linked. Expressed by the venom gland.

The protein resides in the secreted. In terms of biological role, interferes with one step of hemostasis (modulation of platelet aggregation, or coagulation cascade, for example). The protein is Snaclec 7 of Echis pyramidum leakeyi (Leakey's carpet viper).